A 71-amino-acid polypeptide reads, in one-letter code: Antitoxin VapB26 (71 aa).

Its function is as follows. Antitoxin component of a type II toxin-antitoxin (TA) system. Upon expression in M.smegmatis neutralizes the effect of cognate toxin VapC26. The chain is Antitoxin VapB26 (vapB26) from Mycobacterium tuberculosis (strain ATCC 25618 / H37Rv).